The chain runs to 985 residues: UPF0182 protein cgR_0895 (985 aa).

The next 7 membrane-spanning stretches (helical) occupy residues 19-39, 63-83, 115-135, 176-196, 215-235, 262-282, and 290-310; these read VTWIFAIIALIILIAPMSVGF, IVLFVIFALIAGFVTWLAGYF, VMVLIPIFVALLAGLIGQRSW, SMMLIVAFLIALVGHYLMGGI, TQLAVTAGLWMLVKVAGYWLD, KIILLVIALFVAIAFFSAIFL, and LAVVLMLLSSVIIGAAWPLML. The segment at 906–944 is disordered; sequence AQDIEEVDGTTTTPSTDETDTDTDQPATETPTAPVSEAE. Residues 929–939 are compositionally biased toward low complexity; that stretch reads DQPATETPTAP.

This sequence belongs to the UPF0182 family.

The protein resides in the cell membrane. This Corynebacterium glutamicum (strain R) protein is UPF0182 protein cgR_0895.